The primary structure comprises 1370 residues: DNA-directed RNA polymerase subunit beta (1370 aa).

Belongs to the RNA polymerase beta chain family. The RNAP catalytic core consists of 2 alpha, 1 beta, 1 beta' and 1 omega subunit. When a sigma factor is associated with the core the holoenzyme is formed, which can initiate transcription.

The enzyme catalyses RNA(n) + a ribonucleoside 5'-triphosphate = RNA(n+1) + diphosphate. In terms of biological role, DNA-dependent RNA polymerase catalyzes the transcription of DNA into RNA using the four ribonucleoside triphosphates as substrates. This chain is DNA-directed RNA polymerase subunit beta, found in Geobacter metallireducens (strain ATCC 53774 / DSM 7210 / GS-15).